The primary structure comprises 235 residues: Purine nucleoside phosphorylase DeoD-type (235 aa).

H4 contributes to the a purine D-ribonucleoside binding site. Phosphate contacts are provided by residues G20, R24, R43, and R87–T90. A purine D-ribonucleoside contacts are provided by residues E162, E179–E181, and S203–D204. Residue D204 is the Proton donor of the active site.

This sequence belongs to the PNP/UDP phosphorylase family. Homohexamer; trimer of homodimers.

The enzyme catalyses a purine D-ribonucleoside + phosphate = a purine nucleobase + alpha-D-ribose 1-phosphate. It carries out the reaction a purine 2'-deoxy-D-ribonucleoside + phosphate = a purine nucleobase + 2-deoxy-alpha-D-ribose 1-phosphate. Functionally, catalyzes the reversible phosphorolytic breakdown of the N-glycosidic bond in the beta-(deoxy)ribonucleoside molecules, with the formation of the corresponding free purine bases and pentose-1-phosphate. The sequence is that of Purine nucleoside phosphorylase DeoD-type from Bacillus anthracis (strain CDC 684 / NRRL 3495).